We begin with the raw amino-acid sequence, 88 residues long: Antitoxin HipB (88 aa).

The HTH cro/C1-type domain occupies 17 to 71; sequence MKLVRQQNGWTQSELAKKIGIKQATISNFENNPDNTTLTTFFKILQSLELSMTLC. Residues 21–47 constitute a DNA-binding region (H-T-H motif); sequence RQQNGWTQSELAKKIGIKQATISNFEN.

In terms of assembly, homodimer. Binds operator DNA sites in the absence of HipA, inducing a 70 degree bend in consecutive operators and deforming DNA between the operators so that HipB dimers bind on opposite faces of the DNA. Forms a HipA(2)HipB(2) heterotetramer which can interact with a single operator site on DNA, inducing a 70 degree bend. When 2 operators are present each HipB dimer contacts 1 HipA molecule, which are brought together by the DNA bend and dimerize, blocking the HipA active site and inactivating its toxic activity. HipA-HipB-induced bending also distorts the -35 and -10 boxes of the promoter and probably prevents sigma-factor binding, and additionally bound HipB and HipA block RNA polymerase access to the -35 box, thus repressing the operon. This complex also blocks the toxic activity of HipA. Mutations present in allele hipA7 (G22S and D291A) decrease the affinity of HipA for HipB. Post-translationally, degraded by Lon protease in vivo; half-life is 17 minutes in wild-type cells and over 200 minutes in a lon deletion strain. In vitro degradation by Lon is Mg(2+)-ATP-dependent.

Its activity is regulated as follows. Degraded by Lon protease; degradation is inhibited in a HipA-HipB complex and when bound to the operator consensus sequence dsDNA. Functionally, antitoxin component of a type II toxin-antitoxin (TA) system. Neutralizes the toxic effect of cognate toxin HipA. Also neutralizes the toxic effect of non-cognate toxin YjjJ. Binds to operator sites with the consensus sequence 5-'TATCCN(8)GGATA-3' to repress the hipBA operon promoter; binding of HipB(2) to DNA induces a 70 degree bend. This forces HipA dimerization, which blocks HipA's active site and thus its toxic action. May play a role in biofilm formation. The polypeptide is Antitoxin HipB (hipB) (Escherichia coli (strain K12)).